Here is a 454-residue protein sequence, read N- to C-terminus: Bifunctional protein GlmU (454 aa).

Positions 1–225 (MNIVILAAGM…LWETLGVNSK (225 aa)) are pyrophosphorylase. Residues 6–9 (LAAG), K20, Q71, 76–77 (GT), 98–100 (YGD), G135, E150, N165, and N223 contribute to the UDP-N-acetyl-alpha-D-glucosamine site. Residue D100 participates in Mg(2+) binding. Mg(2+) is bound at residue N223. The linker stretch occupies residues 226–246 (VQLAEIERIHQRNIAQRLLEA). The interval 247-454 (GVTLLDPARI…WQRPVKQPKK (208 aa)) is N-acetyltransferase. Residues R329 and K347 each contribute to the UDP-N-acetyl-alpha-D-glucosamine site. H359 acts as the Proton acceptor in catalysis. Residues Y362 and N373 each contribute to the UDP-N-acetyl-alpha-D-glucosamine site. Acetyl-CoA is bound by residues A376, 382-383 (NY), S401, A419, and R436.

In the N-terminal section; belongs to the N-acetylglucosamine-1-phosphate uridyltransferase family. This sequence in the C-terminal section; belongs to the transferase hexapeptide repeat family. In terms of assembly, homotrimer. It depends on Mg(2+) as a cofactor.

Its subcellular location is the cytoplasm. It catalyses the reaction alpha-D-glucosamine 1-phosphate + acetyl-CoA = N-acetyl-alpha-D-glucosamine 1-phosphate + CoA + H(+). The catalysed reaction is N-acetyl-alpha-D-glucosamine 1-phosphate + UTP + H(+) = UDP-N-acetyl-alpha-D-glucosamine + diphosphate. The protein operates within nucleotide-sugar biosynthesis; UDP-N-acetyl-alpha-D-glucosamine biosynthesis; N-acetyl-alpha-D-glucosamine 1-phosphate from alpha-D-glucosamine 6-phosphate (route II): step 2/2. It participates in nucleotide-sugar biosynthesis; UDP-N-acetyl-alpha-D-glucosamine biosynthesis; UDP-N-acetyl-alpha-D-glucosamine from N-acetyl-alpha-D-glucosamine 1-phosphate: step 1/1. Its pathway is bacterial outer membrane biogenesis; LPS lipid A biosynthesis. Functionally, catalyzes the last two sequential reactions in the de novo biosynthetic pathway for UDP-N-acetylglucosamine (UDP-GlcNAc). The C-terminal domain catalyzes the transfer of acetyl group from acetyl coenzyme A to glucosamine-1-phosphate (GlcN-1-P) to produce N-acetylglucosamine-1-phosphate (GlcNAc-1-P), which is converted into UDP-GlcNAc by the transfer of uridine 5-monophosphate (from uridine 5-triphosphate), a reaction catalyzed by the N-terminal domain. This Cupriavidus metallidurans (strain ATCC 43123 / DSM 2839 / NBRC 102507 / CH34) (Ralstonia metallidurans) protein is Bifunctional protein GlmU.